The sequence spans 282 residues: MKKLSVIFLSVSMLSGIAFADKDKVVATYKGGEVKESQIMKEFKPQLNLQSGETIKNFDDFPPQDQEKLIKIYVNNLLLKEEVAKSNITSSKEFQEKLENAKNQLAQQELLANYIKSNITDKMFDDEYNKYVGNLKGKEQIKVAHILVKSQKEANNIKTKLSKGGNFTKLAEESSLDKASASNGGVIGYILLNQPGQLVPEFEKKAFALKVNEVSTPVKTDFGWHIIKVLEKKPVPIPTKEEAKVTIDNILAAEVLKKYISDLEAKADLKIMLPKAGSKAGS.

The N-terminal stretch at 1–20 (MKKLSVIFLSVSMLSGIAFA) is a signal peptide. The PpiC domain occupies 138–231 (KEQIKVAHIL…FGWHIIKVLE (94 aa)).

Belongs to the PpiC/parvulin rotamase family.

Its subcellular location is the cell outer membrane. The enzyme catalyses [protein]-peptidylproline (omega=180) = [protein]-peptidylproline (omega=0). This chain is Parvulin-like PPIase (plp), found in Rickettsia felis (strain ATCC VR-1525 / URRWXCal2) (Rickettsia azadi).